Reading from the N-terminus, the 444-residue chain is Bifunctional protein GlmU (444 aa).

The segment at 1 to 226 (MTDSTHRTTA…EAELAGVNSR (226 aa)) is pyrophosphorylase. Residues 13 to 16 (LAAG), K27, Q75, and 80 to 81 (GT) contribute to the UDP-N-acetyl-alpha-D-glucosamine site. Residue D103 coordinates Mg(2+). UDP-N-acetyl-alpha-D-glucosamine-binding residues include G139, E153, N168, and N224. N224 serves as a coordination point for Mg(2+). Residues 227–247 (SELARAEATLQTRLRNAAMDA) form a linker region. The segment at 248–444 (GVTLVAPETV…QSLKARKEQG (197 aa)) is N-acetyltransferase. UDP-N-acetyl-alpha-D-glucosamine contacts are provided by R313 and K331. Residue H343 is the Proton acceptor of the active site. UDP-N-acetyl-alpha-D-glucosamine is bound by residues Y346 and N357. Acetyl-CoA contacts are provided by residues A360, 366–367 (NY), S385, A403, and R420.

This sequence in the N-terminal section; belongs to the N-acetylglucosamine-1-phosphate uridyltransferase family. It in the C-terminal section; belongs to the transferase hexapeptide repeat family. As to quaternary structure, homotrimer. Mg(2+) serves as cofactor.

The protein resides in the cytoplasm. The enzyme catalyses alpha-D-glucosamine 1-phosphate + acetyl-CoA = N-acetyl-alpha-D-glucosamine 1-phosphate + CoA + H(+). It catalyses the reaction N-acetyl-alpha-D-glucosamine 1-phosphate + UTP + H(+) = UDP-N-acetyl-alpha-D-glucosamine + diphosphate. It functions in the pathway nucleotide-sugar biosynthesis; UDP-N-acetyl-alpha-D-glucosamine biosynthesis; N-acetyl-alpha-D-glucosamine 1-phosphate from alpha-D-glucosamine 6-phosphate (route II): step 2/2. Its pathway is nucleotide-sugar biosynthesis; UDP-N-acetyl-alpha-D-glucosamine biosynthesis; UDP-N-acetyl-alpha-D-glucosamine from N-acetyl-alpha-D-glucosamine 1-phosphate: step 1/1. The protein operates within bacterial outer membrane biogenesis; LPS lipid A biosynthesis. Catalyzes the last two sequential reactions in the de novo biosynthetic pathway for UDP-N-acetylglucosamine (UDP-GlcNAc). The C-terminal domain catalyzes the transfer of acetyl group from acetyl coenzyme A to glucosamine-1-phosphate (GlcN-1-P) to produce N-acetylglucosamine-1-phosphate (GlcNAc-1-P), which is converted into UDP-GlcNAc by the transfer of uridine 5-monophosphate (from uridine 5-triphosphate), a reaction catalyzed by the N-terminal domain. The sequence is that of Bifunctional protein GlmU from Gluconobacter oxydans (strain 621H) (Gluconobacter suboxydans).